Reading from the N-terminus, the 430-residue chain is Purine nucleoside phosphorylase LACC1 (430 aa).

Residue Lys247 is modified to N6-acetyllysine. Positions 250, 284, and 301 each coordinate Zn(2+).

Belongs to the purine nucleoside phosphorylase YfiH/LACC1 family. As to quaternary structure, interacts with FASN. Interacts with SDHA. Interacts with ATF6, EIF2AK3 and ERN1. Phosphorylated on tyrosine residues. As to expression, ubiquitously expressed, with higher expression levels in immune-related tissues such as lymph nodes and spleen. Expressed in both intestinal and peripheral myeloid-derived cells.

It is found in the cytoplasm. It localises to the nucleus. The protein localises to the endoplasmic reticulum. The protein resides in the peroxisome. The enzyme catalyses adenosine + phosphate = alpha-D-ribose 1-phosphate + adenine. It catalyses the reaction inosine + phosphate = alpha-D-ribose 1-phosphate + hypoxanthine. The catalysed reaction is guanosine + phosphate = alpha-D-ribose 1-phosphate + guanine. It carries out the reaction S-methyl-5'-thioadenosine + phosphate = 5-(methylsulfanyl)-alpha-D-ribose 1-phosphate + adenine. The enzyme catalyses adenosine + H2O + H(+) = inosine + NH4(+). Purine nucleoside enzyme that catalyzes the phosphorolysis of adenosine, guanosine and inosine nucleosides, yielding D-ribose 1-phosphate and the respective free bases, adenine, guanine and hypoxanthine. Also catalyzes the phosphorolysis of S-methyl-5'-thioadenosine into adenine and S-methyl-5-thio-alpha-D-ribose 1-phosphate. Also has adenosine deaminase activity. Acts as a regulator of innate immunity in macrophages by modulating the purine nucleotide metabolism, thereby regulating the metabolic function and bioenergetic state of macrophages. Enables a purine nucleotide cycle between adenosine and inosine monophosphate and adenylosuccinate that prevents cytoplasmic acidification and balances the cytoplasmic-mitochondrial redox interface. The purine nucleotide cycle consumes aspartate and releases fumarate in a manner involving fatty acid oxidation and ATP-citrate lyase activity. Participates in pattern recognition receptor (PRR)-induced cytokines in macrophages: associates with the NOD2-signaling complex and promotes optimal NOD2-induced signaling, cytokine secretion and bacterial clearance. Localizes to the endoplasmic reticulum upon PRR stimulation of macrophages and associates with endoplasmic reticulum-stress sensors, promoting the endoplasmic reticulum unfolded protein response (UPR). Does not show laccase activity. The sequence is that of Purine nucleoside phosphorylase LACC1 from Homo sapiens (Human).